Here is a 284-residue protein sequence, read N- to C-terminus: Circadian clock oscillator protein KaiA (284 aa).

Residues 1 to 135 (MLSQIAICIW…LRLAPVETMA (135 aa)) are psR domain, binds oxidized quinones. One can recognise a KaiA N-terminal domain in the interval 1–164 (MLSQIAICIW…DLAQRLQERL (164 aa)). Residues 165 to 173 (GYLGVYYKR) are flexible linker. The 109-residue stretch at 174–282 (DPDRFLRNLP…CEMYRRSIPR (109 aa)) folds into the KaiA C-terminal domain.

Belongs to the KaiA family. As to quaternary structure, homodimer. The KaiABC complex composition changes during the circadian cycle to control KaiC phosphorylation. Complexes KaiC(6), KaiA(2-4):KaiC(6), KaiB(6):KaiC(6) and KaiC(6):KaiB(6):KaiA(12) are among the most important forms, many form cooperatively. The KaiA:KaiB complex is only found at 20-24 hours in the circadian cycle (subjective night). Binds to the C-terminal A-loop of KaiC via a coiled-coil structure. KaiA and CikA compete for binding to KaiB(fs). CikA copurifies with this protein in the clock complex. Interacts with LdpA.

With respect to regulation, binding of oxidized quinones (produced as darkness falls) prevents KaiA from stimulating KaiC autophosphorylation. In terms of biological role, key component of the KaiABC oscillator complex, which constitutes the main circadian regulator in cyanobacteria. Complex composition changes during the circadian cycle to control KaiC phosphorylation. KaiA stimulates KaiC autophosphorylation, while KaiB sequesters KaiA, leading to KaiC autodephosphorylation. KaiA binding to the KaiC CII domain during the subjective day yields KaiA(2-4):KaiC(6) complexes which stimulate KaiC autophosphorylation. A KaiA dimer is sufficient to enhance KaiC hexamer phosphorylation. Phospho-Ser-431 KaiC accumulation triggers binding of KaiB during the subjective night to form the KaiB(6):KaiC(6) complex, leading to changes in the output regulators CikA and SasA. KaiB(6):KaiC(6) formation exposes a site for KaiA binding on KaiB that sequesters KaiA from KaiC's CII domain, making the KaiC(6):KaiB(6):KaiA(12) complex resulting in KaiC autodephosphorylation. Complete dephosphorylation of KaiC leads to dissociation of KaiA(2):KaiB(1), completing 1 cycle of the Kai oscillator. Functionally, circadian oscillations can be generated in vitro by incubating KaiA, KaiB and KaiC with 1 mM ATP. The cycle is self-sustainable for at least 3 cycles and resistant to temperature changes. A very robust clock is reconstituted with KaiA, KaiB, KaiC, SasA, CikA and RpaA; output is measured by transcription from an appropriate reporter. KaiA binds oxidized quinones via its N-terminal PsR domain and is able to sense redox signals directly; quinone analog DBMIB (2,5-dibromo-3-methyl-6-isopropyl-p-benzoquinone) blocks KaiA stimulation of KaiC phosphorylation. The homodimer binds up to 8 quinones in the crystal structure, 3 in the PsR domain and 1 via the C-terminal helical bundle. Binding of oxidized quinone to the KaiA C-terminal domain reduces the phosphorylation of KaiC slightly; quinones may interact in a complex manner with KaiA to mediate clock input. This Synechococcus elongatus (strain ATCC 33912 / PCC 7942 / FACHB-805) (Anacystis nidulans R2) protein is Circadian clock oscillator protein KaiA.